Here is a 100-residue protein sequence, read N- to C-terminus: NADH-quinone oxidoreductase subunit K (100 aa).

3 helical membrane-spanning segments follow: residues T4–L24, I29–F49, and V60–L80.

This sequence belongs to the complex I subunit 4L family. As to quaternary structure, NDH-1 is composed of 14 different subunits. Subunits NuoA, H, J, K, L, M, N constitute the membrane sector of the complex.

It localises to the cell membrane. It catalyses the reaction a quinone + NADH + 5 H(+)(in) = a quinol + NAD(+) + 4 H(+)(out). NDH-1 shuttles electrons from NADH, via FMN and iron-sulfur (Fe-S) centers, to quinones in the respiratory chain. The immediate electron acceptor for the enzyme in this species is believed to be ubiquinone. Couples the redox reaction to proton translocation (for every two electrons transferred, four hydrogen ions are translocated across the cytoplasmic membrane), and thus conserves the redox energy in a proton gradient. The protein is NADH-quinone oxidoreductase subunit K of Chloroflexus aurantiacus (strain ATCC 29366 / DSM 635 / J-10-fl).